The chain runs to 202 residues: Small ribosomal subunit protein uS4c-1 (202 aa).

Positions 90-152 (MRLDNIVLRA…NKSRQLIDLN (63 aa)) constitute an S4 RNA-binding domain.

Belongs to the universal ribosomal protein uS4 family. In terms of assembly, part of the 30S ribosomal subunit. Contacts protein S5. The interaction surface between S4 and S5 is involved in control of translational fidelity.

It is found in the plastid. It localises to the chloroplast. Functionally, one of the primary rRNA binding proteins, it binds directly to 16S rRNA where it nucleates assembly of the body of the 30S subunit. With S5 and S12 plays an important role in translational accuracy. In Cyanidium caldarium (Red alga), this protein is Small ribosomal subunit protein uS4c-1.